The primary structure comprises 77 residues: U8-lycotoxin-Ls1m (77 aa).

The N-terminal stretch at 1–20 (MKLIIFTGLVLFSIVSLIEA) is a signal peptide. Residues 21-26 (QAENEK) constitute a propeptide that is removed on maturation.

Belongs to the neurotoxin 19 (CSTX) family. 08 (U8-Lctx) subfamily. In terms of processing, contains 4 disulfide bonds. Expressed by the venom gland.

Its subcellular location is the secreted. The sequence is that of U8-lycotoxin-Ls1m from Lycosa singoriensis (Wolf spider).